Reading from the N-terminus, the 391-residue chain is Acetate kinase (391 aa).

Asn-7 is a binding site for Mg(2+). Position 14 (Lys-14) interacts with ATP. Arg-88 lines the substrate pocket. The Proton donor/acceptor role is filled by Asp-145. ATP contacts are provided by residues 203 to 207, 278 to 280, and 326 to 330; these read HAGNG, DAR, and GMGEN. Glu-378 provides a ligand contact to Mg(2+).

This sequence belongs to the acetokinase family. In terms of assembly, homodimer. Mg(2+) serves as cofactor. Requires Mn(2+) as cofactor.

Its subcellular location is the cytoplasm. The catalysed reaction is acetate + ATP = acetyl phosphate + ADP. The protein operates within metabolic intermediate biosynthesis; acetyl-CoA biosynthesis; acetyl-CoA from acetate: step 1/2. Catalyzes the formation of acetyl phosphate from acetate and ATP. Can also catalyze the reverse reaction. In Phytoplasma mali (strain AT), this protein is Acetate kinase.